The following is a 464-amino-acid chain: tRNA-2-methylthio-N(6)-dimethylallyladenosine synthase (464 aa).

The tract at residues 1-25 (MSDLVPLSRKPAPAAGDPAPSPAAP) is disordered. One can recognise an MTTase N-terminal domain in the interval 27–142 (RKVYVHTFGC…LPEMVERARG (116 aa)). C36, C72, C105, C180, C184, and C187 together coordinate [4Fe-4S] cluster. The 233-residue stretch at 166–398 (ARGRATAFVT…LAAQRRIAGE (233 aa)) folds into the Radical SAM core domain. The TRAM domain occupies 401–464 (AAELGKVVEV…GGSSLSGTLA (64 aa)).

The protein belongs to the methylthiotransferase family. MiaB subfamily. In terms of assembly, monomer. [4Fe-4S] cluster is required as a cofactor.

Its subcellular location is the cytoplasm. The enzyme catalyses N(6)-dimethylallyladenosine(37) in tRNA + (sulfur carrier)-SH + AH2 + 2 S-adenosyl-L-methionine = 2-methylsulfanyl-N(6)-dimethylallyladenosine(37) in tRNA + (sulfur carrier)-H + 5'-deoxyadenosine + L-methionine + A + S-adenosyl-L-homocysteine + 2 H(+). Its function is as follows. Catalyzes the methylthiolation of N6-(dimethylallyl)adenosine (i(6)A), leading to the formation of 2-methylthio-N6-(dimethylallyl)adenosine (ms(2)i(6)A) at position 37 in tRNAs that read codons beginning with uridine. This chain is tRNA-2-methylthio-N(6)-dimethylallyladenosine synthase, found in Anaeromyxobacter dehalogenans (strain 2CP-C).